The following is a 529-amino-acid chain: Type I inositol polyphosphate 5-phosphatase 5 (529 aa).

2 catalytic regions span residues 371–386 and 451–466; these read DRVL…VALT and KRRT…WKGE.

It belongs to the inositol polyphosphate 5-phosphatase family.

Its function is as follows. May be involved in the regulation of root hairs development. Required for restricting both the size of the root-hair initiation site and the width of the root hairs during the transition to tip growth, but is not required for normal subsequent tip growth. In Arabidopsis thaliana (Mouse-ear cress), this protein is Type I inositol polyphosphate 5-phosphatase 5.